The chain runs to 122 residues: Acidic phospholipase A2 BlatPLA2 (122 aa).

7 disulfides stabilise this stretch: Cys26/Cys115, Cys28/Cys44, Cys43/Cys95, Cys49/Cys122, Cys50/Cys88, Cys57/Cys81, and Cys75/Cys86. The Ca(2+) site is built by Tyr27, Gly29, and Gly31. The active site involves His47. Asp48 provides a ligand contact to Ca(2+). Asp89 is a catalytic residue.

The protein belongs to the phospholipase A2 family. Group II subfamily. D49 sub-subfamily. As to quaternary structure, monomer. The cofactor is Ca(2+). In terms of tissue distribution, expressed by the venom gland.

It localises to the secreted. It catalyses the reaction a 1,2-diacyl-sn-glycero-3-phosphocholine + H2O = a 1-acyl-sn-glycero-3-phosphocholine + a fatty acid + H(+). Acidic phospholipase A2 (PLA2) that only causes a mild edema, when subcutaneously injected in the mice foot. PLA2 catalyzes the calcium-dependent hydrolysis of the 2-acyl groups in 3-sn-phosphoglycerides. This is Acidic phospholipase A2 BlatPLA2 from Bothriechis lateralis (Side-striped palm pitviper).